We begin with the raw amino-acid sequence, 741 residues long: Chromosome transmission fidelity protein 18 (741 aa).

183-190 (GPPGIGKT) is an ATP binding site.

The protein belongs to the activator 1 small subunits family. CTF18 subfamily. Component of the CTF18-RFC complex, which consists of CTF18, CTF8, DCC1, RFC2, RFC3, RFC4 and RFC5. CTF18 interacts with ECO1.

It localises to the nucleus. Its function is as follows. Essential for the fidelity of chromosome transmission. Required for the DNA replication block checkpoint. Component of the RFC-like complex CTF18-RFC which is required for efficient establishment of chromosome cohesion during S-phase and may load or unload POL30/PCNA. During a clamp loading circle, the RFC:clamp complex binds to DNA and the recognition of the double-stranded/single-stranded junction stimulates ATP hydrolysis by RFC. The complex presumably provides bipartite ATP sites in which one subunit supplies a catalytic site for hydrolysis of ATP bound to the neighboring subunit. Dissociation of RFC from the clamp leaves the clamp encircling DNA. The polypeptide is Chromosome transmission fidelity protein 18 (CTF18) (Saccharomyces cerevisiae (strain ATCC 204508 / S288c) (Baker's yeast)).